The chain runs to 179 residues: Large ribosomal subunit protein uL6 (179 aa).

Belongs to the universal ribosomal protein uL6 family. In terms of assembly, part of the 50S ribosomal subunit.

This protein binds to the 23S rRNA, and is important in its secondary structure. It is located near the subunit interface in the base of the L7/L12 stalk, and near the tRNA binding site of the peptidyltransferase center. The sequence is that of Large ribosomal subunit protein uL6 from Treponema pallidum (strain Nichols).